The sequence spans 381 residues: UDP-4-amino-4-deoxy-L-arabinose--oxoglutarate aminotransferase (381 aa).

The residue at position 182 (lysine 182) is an N6-(pyridoxal phosphate)lysine.

Belongs to the DegT/DnrJ/EryC1 family. ArnB subfamily. Homodimer. Pyridoxal 5'-phosphate serves as cofactor.

The catalysed reaction is UDP-4-amino-4-deoxy-beta-L-arabinose + 2-oxoglutarate = UDP-beta-L-threo-pentopyranos-4-ulose + L-glutamate. It functions in the pathway nucleotide-sugar biosynthesis; UDP-4-deoxy-4-formamido-beta-L-arabinose biosynthesis; UDP-4-deoxy-4-formamido-beta-L-arabinose from UDP-alpha-D-glucuronate: step 2/3. It participates in bacterial outer membrane biogenesis; lipopolysaccharide biosynthesis. Functionally, catalyzes the conversion of UDP-4-keto-arabinose (UDP-Ara4O) to UDP-4-amino-4-deoxy-L-arabinose (UDP-L-Ara4N). The modified arabinose is attached to lipid A and is required for resistance to polymyxin and cationic antimicrobial peptides. This is UDP-4-amino-4-deoxy-L-arabinose--oxoglutarate aminotransferase from Proteus mirabilis (strain HI4320).